Consider the following 1059-residue polypeptide: Kinesin-like protein KIN-7K, chloroplastic (1059 aa).

Low complexity-rich tracts occupy residues 1–35 and 43–58; these read MSSR…SAGS and PRSY…SSHF. A chloroplast-targeting transit peptide spans 1–48; sequence MSSRPSSSASSRRSSSPFSAGSRRPPTSSSSSAGSYLTGRLMPRSYST. Positions 1–99 are disordered; that stretch reads MSSRPSSSAS…SPPSPVPFPS (99 aa). Gly residues predominate over residues 59–69; that stretch reads FGGGGGSGGGS. Residues 70-87 show a composition bias toward low complexity; it reads RSTTPGRRGSSSSSLVGP. Over residues 88–97 the composition is skewed to pro residues; sequence VPSPPSPVPF. In terms of domain architecture, Kinesin motor spans 114–431; that stretch reads SISVTIRFRP…LKFASRAKRV (318 aa). 194-201 serves as a coordination point for ATP; it reads GVTSSGKT. The stretch at 435 to 518 forms a coiled coil; sequence AARNRMIDEK…IQRLTKLILV (84 aa). The disordered stretch occupies residues 526-570; sequence ALTDTSSHQRHNSVNEEDKVSTSQDSSMLVQNDSATKDSLSSASP. Positions 546–569 are enriched in polar residues; it reads STSQDSSMLVQNDSATKDSLSSAS. Coiled coils occupy residues 640 to 674, 700 to 781, and 862 to 910; these read EGTK…GEAS, ELEL…EENR, and LEDM…LEND. The RING-type zinc-finger motif lies at 1013–1048; sequence CKVCFESATAAVLLPCRHFCLCKPCSLACSECPLCR.

It belongs to the TRAFAC class myosin-kinesin ATPase superfamily. Kinesin family. KIN-7 subfamily.

It is found in the plastid. Its subcellular location is the chloroplast. The sequence is that of Kinesin-like protein KIN-7K, chloroplastic from Oryza sativa subsp. japonica (Rice).